We begin with the raw amino-acid sequence, 246 residues long: Small ribosomal subunit protein uS2 (246 aa).

The disordered stretch occupies residues 224–246 (AKQGEESAETEAKEAETTETTTA). The segment covering 225-239 (KQGEESAETEAKEAE) has biased composition (basic and acidic residues).

Belongs to the universal ribosomal protein uS2 family.

This Bacillus licheniformis (strain ATCC 14580 / DSM 13 / JCM 2505 / CCUG 7422 / NBRC 12200 / NCIMB 9375 / NCTC 10341 / NRRL NRS-1264 / Gibson 46) protein is Small ribosomal subunit protein uS2.